A 481-amino-acid chain; its full sequence is Glutamine synthetase (481 aa).

Positions 22 to 106 (NEVEFVDFRF…VFCDVYDVYK (85 aa)) constitute a GS beta-grasp domain. Residues 114–481 (PRSIAKKALQ…PFEFITTYSC (368 aa)) form the GS catalytic domain. 4 residues coordinate Mg(2+): Glu139, Glu141, Glu223, and Glu230. L-glutamate-binding positions include 274 to 275 (NG) and Gly275. A Mg(2+)-binding site is contributed by His279. Residues 281–283 (HVS) and Ser283 each bind ATP. Arg331, Glu337, and Arg349 together coordinate L-glutamate. Residues Arg349 and Arg354 each contribute to the ATP site. Glu367 contacts Mg(2+). Position 369 (Arg369) interacts with L-glutamate.

It belongs to the glutamine synthetase family. In terms of assembly, oligomer of 12 subunits arranged in the form of two hexameric ring. The cofactor is Mg(2+).

Its subcellular location is the cytoplasm. The enzyme catalyses L-glutamate + NH4(+) + ATP = L-glutamine + ADP + phosphate + H(+). The activity of this enzyme could be controlled by adenylation under conditions of abundant glutamine. In terms of biological role, catalyzes the ATP-dependent biosynthesis of glutamine from glutamate and ammonia. The protein is Glutamine synthetase of Helicobacter pylori (strain ATCC 700392 / 26695) (Campylobacter pylori).